The following is a 172-amino-acid chain: RNA pyrophosphohydrolase (172 aa).

Positions 6 to 149 (GYRLNVGIVI…KRDVYRRAMK (144 aa)) constitute a Nudix hydrolase domain. The Nudix box signature appears at 38 to 59 (GGIDDGETPEQAMFRELYEEVG).

The protein belongs to the Nudix hydrolase family. RppH subfamily. Requires a divalent metal cation as cofactor.

In terms of biological role, accelerates the degradation of transcripts by removing pyrophosphate from the 5'-end of triphosphorylated RNA, leading to a more labile monophosphorylated state that can stimulate subsequent ribonuclease cleavage. The chain is RNA pyrophosphohydrolase from Vibrio vulnificus (strain CMCP6).